Reading from the N-terminus, the 292-residue chain is Aquaporin-3 (292 aa).

At 1–24 (MGRQKELVNRCGEMLHIRYRLLRQ) the chain is on the cytoplasmic side. A helical membrane pass occupies residues 25-42 (ALAECLGTLILVMFGCGS). The Extracellular segment spans residues 43-56 (VAQVVLSRGTHGGF). A helical membrane pass occupies residues 57–74 (LTINLAFGFAVTLGILIA). At 75-78 (GQVS) the chain is on the cytoplasmic side. An intramembrane region (discontinuously helical) is located at residues 79 to 92 (GAHLNPAVTFAMCF). Positions 83-85 (NPA) match the NPA 1 motif. The Cytoplasmic portion of the chain corresponds to 93-100 (LAREPWIK). A helical membrane pass occupies residues 101–121 (LPVYTLAQTLGAFLGAGIIFG). Residues 122 to 159 (LYYDAIWAFANNQLIVSGPNGTAGIFATYPSGHLDMVN) are Extracellular-facing. Asn-141 is a glycosylation site (N-linked (GlcNAc...) asparagine). The chain crosses the membrane as a helical span at residues 160-177 (GFFDQFIGTASLIVCVLA). Residues 178-189 (IVDPYNNPVPRG) are Cytoplasmic-facing. The chain crosses the membrane as a helical span at residues 190–206 (LEAFTVGLVVLVIGTSM). Over 207 to 210 (GFNS) the chain is Extracellular. Positions 211 to 224 (GYAVNPARDFGPRL) form an intramembrane region, discontinuously helical. Positions 215 to 217 (NPA) match the NPA 2 motif. Topologically, residues 225 to 242 (FTAIAGWGSEVFTTGRHW) are extracellular. Residues 243 to 264 (WWVPIVSPLLGSIAGVFVYQLM) form a helical membrane-spanning segment. At 265–292 (IGCHLEPPPPSTDEENVKLSHVKHKEQM) the chain is on the cytoplasmic side.

It belongs to the MIP/aquaporin (TC 1.A.8) family. In terms of assembly, homotetramer; each monomer provides an independent glycerol/water pore. Could also exist in other oligomeric states.

It localises to the cell membrane. The protein localises to the basolateral cell membrane. The enzyme catalyses glycerol(in) = glycerol(out). It catalyses the reaction H2O(in) = H2O(out). The catalysed reaction is urea(in) = urea(out). It carries out the reaction H2O2(out) = H2O2(in). Its function is as follows. Aquaglyceroporins form homotetrameric transmembrane channels, with each monomer independently mediating glycerol and water transport across the plasma membrane along their osmotic gradient. Could also be permeable to urea. Also participates in cell permeability to H2O2 and H2O2-mediated signaling. In skin, transports glycerol to the epidermis and stratum corneum, where it maintains hydration, elasticity, and supports lipid biosynthesis for barrier repair. In kidney, contributes to the reabsorption of water, helping the body maintain proper fluid balance. The polypeptide is Aquaporin-3 (Bos taurus (Bovine)).